The primary structure comprises 119 residues: Large ribosomal subunit protein bL20 (119 aa).

The protein belongs to the bacterial ribosomal protein bL20 family.

Binds directly to 23S ribosomal RNA and is necessary for the in vitro assembly process of the 50S ribosomal subunit. It is not involved in the protein synthesizing functions of that subunit. The chain is Large ribosomal subunit protein bL20 from Erythrobacter litoralis (strain HTCC2594).